Here is an 804-residue protein sequence, read N- to C-terminus: MSLETSTTTPAGSPLSDRELDLIDKYWRAANYLSVGQIYLLDNPLLKEPLSAEHVKPRLLGHWGTTPGLNLVYAHLNRIIRNRDADVIYVTGPGHGGPGLVANAYLEGTYSEVYTGIEEDAEGLRKLFRQFSFPGGIPSHVAAQTPGSIHEGGELGYALVHAYGAAFDNPYLVVACVIGDGEAETGPLAAGWHSNKFLNPVTDGAVLPILALNGYKIANPTVLARIPHTELEALLRGYGYRPITVAGDDPTDVHRQLAAALDEAFDDIAAIQGVARGGGEVQRPVWPMIVLRTPKGWTGPKVVDGKRVEGTWRSHQVPLAETHDNPEHRAQLEEWLRSYGPEQLFDDDGRLRAELRALAPTGDRRMSANPHANGGLLLHDLDLPDFRDYAVPVTRPGSVTHEATRVLGTFLRDVIARNKDRFRMMGPDETASNRLDAVYGATEKVWLSATEPDDEHLAPDGRVMEVLSEHLCQGWLEGYLLTGRHGLFNCYEAFVHIVDSMLNQHAKWLATSRELPWRRPIASLNYLLTSHVWRQDHNGASHQDPGFIDLVANKRAELTRVYLPPDGNTLLSVADHCLRSRDYINVIVAGKQPALAYLDMDAAIAHCTRGLGIWDWASTARSIGAEPDVVLACAGDIPTLETLAAADILRRELPDLAVRVVNVVDLMRLQPDSEHPHGLPDREFDALFTRDRPVIFAYHGYPWLIHRLTYRRANHAQLHVRGFKERGTTTTPFDMVMLNDLDRFHLVIDVLDRVEGLASRAAMLRQRMVDARLAARMYTREHGEDDPAIANWTWEPSERNSRSE.

This sequence belongs to the XFP family. Thiamine diphosphate serves as cofactor.

The sequence is that of Probable phosphoketolase from Mycobacterium avium (strain 104).